The sequence spans 159 residues: Transcription elongation factor GreA (159 aa).

Positions 43–76 (LSENAEYDAAREEQSQLEAKIGDLENKLASATIL) form a coiled coil.

Belongs to the GreA/GreB family.

Its function is as follows. Necessary for efficient RNA polymerase transcription elongation past template-encoded arresting sites. The arresting sites in DNA have the property of trapping a certain fraction of elongating RNA polymerases that pass through, resulting in locked ternary complexes. Cleavage of the nascent transcript by cleavage factors such as GreA or GreB allows the resumption of elongation from the new 3'terminus. GreA releases sequences of 2 to 3 nucleotides. The sequence is that of Transcription elongation factor GreA from Chlorobaculum parvum (strain DSM 263 / NCIMB 8327) (Chlorobium vibrioforme subsp. thiosulfatophilum).